Reading from the N-terminus, the 55-residue chain is ASSTWGGSYPACENNCRKQYDDCIKCQGKWAGKRGKCAAHCAVQTTSCNDKCKKH.

Position 10 is a hydroxyproline (Pro10). Cystine bridges form between Cys12-Cys48, Cys16-Cys52, Cys23-Cys41, and Cys26-Cys37.

The protein belongs to the worm B-toxin family.

It is found in the secreted. Its function is as follows. This toxin increases the excitability of nerves by delaying the inactivation of the voltage-gated sodium channel (Nav). Only acts on some crustacean. Neurotoxin B-II is less abundant, but 15-fold more toxic than neurotoxin B-VI. The sequence is that of Neurotoxin B-II from Cerebratulus lacteus (Milky ribbon worm).